The sequence spans 236 residues: Ubiquinone biosynthesis O-methyltransferase (236 aa).

Residues Arg40, Gly59, Asp80, and Leu124 each coordinate S-adenosyl-L-methionine.

It belongs to the methyltransferase superfamily. UbiG/COQ3 family.

The enzyme catalyses a 3-demethylubiquinol + S-adenosyl-L-methionine = a ubiquinol + S-adenosyl-L-homocysteine + H(+). It catalyses the reaction a 3-(all-trans-polyprenyl)benzene-1,2-diol + S-adenosyl-L-methionine = a 2-methoxy-6-(all-trans-polyprenyl)phenol + S-adenosyl-L-homocysteine + H(+). The protein operates within cofactor biosynthesis; ubiquinone biosynthesis. O-methyltransferase that catalyzes the 2 O-methylation steps in the ubiquinone biosynthetic pathway. The chain is Ubiquinone biosynthesis O-methyltransferase from Nitrosococcus oceani (strain ATCC 19707 / BCRC 17464 / JCM 30415 / NCIMB 11848 / C-107).